The following is a 1094-amino-acid chain: RecBCD enzyme subunit RecB (1094 aa).

The UvrD-like helicase ATP-binding domain maps to 1-326 (MDRFELLGPL…YTLGVNWRSD (326 aa)). The DNA-binding and helicase activity, interacts with RecC stretch occupies residues 1–713 (MDRFELLGPL…LLRGRRPGQS (713 aa)). 21–28 (ASAGTGKT) lines the ATP pocket. Residues 357 to 613 (AGHRLASAPR…QIMTVFVAKG (257 aa)) enclose the UvrD-like helicase C-terminal domain. Residues 775 to 1094 (TWRRTSYSDL…DLLDRGRLQS (320 aa)) are nuclease activity, interacts with RecD and RecA. Mg(2+) is bound by residues H838, D975, and D989. D989 serves as the catalytic For nuclease activity.

The protein belongs to the helicase family. UvrD subfamily. Heterotrimer of RecB, RecC and RecD. All subunits contribute to DNA-binding. Interacts with RecA. Mg(2+) serves as cofactor.

The enzyme catalyses Exonucleolytic cleavage (in the presence of ATP) in either 5'- to 3'- or 3'- to 5'-direction to yield 5'-phosphooligonucleotides.. It catalyses the reaction Couples ATP hydrolysis with the unwinding of duplex DNA by translocating in the 3'-5' direction.. The catalysed reaction is ATP + H2O = ADP + phosphate + H(+). Its function is as follows. A helicase/nuclease that prepares dsDNA breaks (DSB) for recombinational DNA repair. Binds to DSBs and unwinds DNA via a highly rapid and processive ATP-dependent bidirectional helicase activity. In the holoenzyme this subunit contributes ATPase, 3'-5' helicase, exonuclease activity and loads RecA onto ssDNA. Unlike the case in E.coli, suppresses RecA-dependent homologous recombination, is instead required for single-strand annealing pathway repair of DSB. This Mycobacterium tuberculosis (strain CDC 1551 / Oshkosh) protein is RecBCD enzyme subunit RecB.